Consider the following 292-residue polypeptide: Phosphatidylserine decarboxylase proenzyme (292 aa).

Active-site charge relay system; for autoendoproteolytic cleavage activity residues include aspartate 89, histidine 146, and serine 252. The active-site Schiff-base intermediate with substrate; via pyruvic acid; for decarboxylase activity is serine 252. At serine 252 the chain carries Pyruvic acid (Ser); by autocatalysis.

The protein belongs to the phosphatidylserine decarboxylase family. PSD-B subfamily. Prokaryotic type I sub-subfamily. Heterodimer of a large membrane-associated beta subunit and a small pyruvoyl-containing alpha subunit. The cofactor is pyruvate. Post-translationally, is synthesized initially as an inactive proenzyme. Formation of the active enzyme involves a self-maturation process in which the active site pyruvoyl group is generated from an internal serine residue via an autocatalytic post-translational modification. Two non-identical subunits are generated from the proenzyme in this reaction, and the pyruvate is formed at the N-terminus of the alpha chain, which is derived from the carboxyl end of the proenzyme. The autoendoproteolytic cleavage occurs by a canonical serine protease mechanism, in which the side chain hydroxyl group of the serine supplies its oxygen atom to form the C-terminus of the beta chain, while the remainder of the serine residue undergoes an oxidative deamination to produce ammonia and the pyruvoyl prosthetic group on the alpha chain. During this reaction, the Ser that is part of the protease active site of the proenzyme becomes the pyruvoyl prosthetic group, which constitutes an essential element of the active site of the mature decarboxylase.

The protein resides in the cell membrane. It catalyses the reaction a 1,2-diacyl-sn-glycero-3-phospho-L-serine + H(+) = a 1,2-diacyl-sn-glycero-3-phosphoethanolamine + CO2. It participates in phospholipid metabolism; phosphatidylethanolamine biosynthesis; phosphatidylethanolamine from CDP-diacylglycerol: step 2/2. Its function is as follows. Catalyzes the formation of phosphatidylethanolamine (PtdEtn) from phosphatidylserine (PtdSer). This Shewanella sp. (strain MR-4) protein is Phosphatidylserine decarboxylase proenzyme.